Reading from the N-terminus, the 764-residue chain is MKNILKILILILICINKINCLDGDGKQFRMIMLLSANVNDMGFNNMMNQGRIGVSKNLQIEDSRLIVVDGENDTKALVEPILQNEDIDFVICSSQGHTVACKYFADKYLKHPTVKTQFLIRGSGSSTANLIQFNYNFASCNYMSGYFAGLHTKTNKIGFLSPGAPKVNDAWVYAFWLGAKQVNPKIQFFYYNVGAFLNPDASERATNDLLERGCDVIGNTLDDFSSGITIMSKGYRTIGTNGFPQKLIYGEKILYSYAYNWTKLFLPIAMSVKAGITNNTNGYGDFNLDESKNFFNIEYSYGVSTDTINRMNQQITFLKSNSRFTHPYYCNEYLPEYTKKNNLNLSTSPTVNNLICIDHSTFLKINPPFPGMTYLGIYNISLVEVEFSQSIQNGFSITTGILIGITILMMIGIIKYSKTPSMRSASPIFLNFILAGGIIVYIGIIVWVGPMSTHSCNARLWLVTLGFSTLIGSLVVKNFRIWLIFDNPELKSIKITNYQLFPWVGACLVINIILMAILTSVGDLKQIDAMNIDSLGKYEYMKVCKMNSSGASTLYTILAYFAALLLVGVFVSWKIRIVDILEFNESGAIANTLYAISFCLFVIVPLMISPQDMQSETIILCTTGLFITTAALLIIFIPKFWRVFRKGANDSEINFNKKKSSSVATARAESGSKGSNGNASSGNRTNRRGNVVSGDFTDDSESSVGDENQKEKEKIKDDVANVTSGAVLAEFTDEASDTDNNEFNDIELSEQPPSIIVNDSENNN.

Positions 1–20 (MKNILKILILILICINKINC) are cleaved as a signal peptide. Residues 21–393 (LDGDGKQFRM…EVEFSQSIQN (373 aa)) are Extracellular-facing. N-linked (GlcNAc...) asparagine glycans are attached at residues Asn-72, Asn-260, Asn-278, Asn-344, and Asn-379. A helical transmembrane segment spans residues 394 to 414 (GFSITTGILIGITILMMIGII). The Cytoplasmic portion of the chain corresponds to 415-427 (KYSKTPSMRSASP). A helical transmembrane segment spans residues 428–448 (IFLNFILAGGIIVYIGIIVWV). Topologically, residues 449–464 (GPMSTHSCNARLWLVT) are extracellular. Residues 465–485 (LGFSTLIGSLVVKNFRIWLIF) form a helical membrane-spanning segment. The Cytoplasmic segment spans residues 486-500 (DNPELKSIKITNYQL). Residues 501–521 (FPWVGACLVINIILMAILTSV) form a helical membrane-spanning segment. The Extracellular portion of the chain corresponds to 522–552 (GDLKQIDAMNIDSLGKYEYMKVCKMNSSGAS). Asn-547 is a glycosylation site (N-linked (GlcNAc...) asparagine). Residues 553 to 573 (TLYTILAYFAALLLVGVFVSW) form a helical membrane-spanning segment. Topologically, residues 574 to 587 (KIRIVDILEFNESG) are cytoplasmic. Residues 588–608 (AIANTLYAISFCLFVIVPLMI) traverse the membrane as a helical segment. At 609–617 (SPQDMQSET) the chain is on the extracellular side. The helical transmembrane segment at 618-638 (IILCTTGLFITTAALLIIFIP) threads the bilayer. Residues 639 to 764 (KFWRVFRKGA…IIVNDSENNN (126 aa)) lie on the Cytoplasmic side of the membrane. The tract at residues 664-764 (ATARAESGSK…IIVNDSENNN (101 aa)) is disordered. Low complexity predominate over residues 671–690 (GSKGSNGNASSGNRTNRRGN). The span at 707 to 719 (ENQKEKEKIKDDV) shows a compositional bias: basic and acidic residues. The span at 731 to 748 (FTDEASDTDNNEFNDIEL) shows a compositional bias: acidic residues.

The protein in the N-terminal section; belongs to the BMP lipoprotein family. This sequence in the C-terminal section; belongs to the G-protein coupled receptor 3 family. GABA-B receptor subfamily.

The protein resides in the membrane. The protein is Metabotropic glutamate receptor-like protein H (grlH) of Dictyostelium discoideum (Social amoeba).